The primary structure comprises 296 residues: NADH-cytochrome b5 reductase 2-A (296 aa).

A helical transmembrane segment spans residues 15-35 (FVIGAPTIALCSYYYSSGAFL). The FAD-binding FR-type domain occupies 47–151 (NNWIDLPISR…KGPIPKWKWV (105 aa)). 154–189 (SFESITLIGGGTGITPLYQLIHAITKNPNDKTKIRL) is a binding site for FAD.

The protein belongs to the flavoprotein pyridine nucleotide cytochrome reductase family. FAD serves as cofactor.

It localises to the mitochondrion outer membrane. It catalyses the reaction 2 Fe(III)-[cytochrome b5] + NADH = 2 Fe(II)-[cytochrome b5] + NAD(+) + H(+). Its function is as follows. May mediate the reduction of outer membrane cytochrome b5. This is NADH-cytochrome b5 reductase 2-A (MCR1A) from Vanderwaltozyma polyspora (strain ATCC 22028 / DSM 70294 / BCRC 21397 / CBS 2163 / NBRC 10782 / NRRL Y-8283 / UCD 57-17) (Kluyveromyces polysporus).